Here is a 344-residue protein sequence, read N- to C-terminus: GTP 3',8-cyclase (344 aa).

The Radical SAM core domain occupies 19 to 245 (PFGRAVTYLR…DIPYRTGGPA (227 aa)). GTP is bound at residue arginine 28. Residues cysteine 35 and cysteine 39 each contribute to the [4Fe-4S] cluster site. Tyrosine 41 is a binding site for S-adenosyl-L-methionine. Position 42 (cysteine 42) interacts with [4Fe-4S] cluster. Arginine 77 is a binding site for GTP. Glycine 81 is a binding site for S-adenosyl-L-methionine. Threonine 111 contributes to the GTP binding site. Serine 135 serves as a coordination point for S-adenosyl-L-methionine. Lysine 171 is a GTP binding site. Methionine 205 serves as a coordination point for S-adenosyl-L-methionine. 2 residues coordinate [4Fe-4S] cluster: cysteine 268 and cysteine 271. 273–275 (RVR) is a GTP binding site. Residue cysteine 285 participates in [4Fe-4S] cluster binding.

Belongs to the radical SAM superfamily. MoaA family. Monomer and homodimer. It depends on [4Fe-4S] cluster as a cofactor.

It catalyses the reaction GTP + AH2 + S-adenosyl-L-methionine = (8S)-3',8-cyclo-7,8-dihydroguanosine 5'-triphosphate + 5'-deoxyadenosine + L-methionine + A + H(+). It participates in cofactor biosynthesis; molybdopterin biosynthesis. Functionally, catalyzes the cyclization of GTP to (8S)-3',8-cyclo-7,8-dihydroguanosine 5'-triphosphate. The sequence is that of GTP 3',8-cyclase from Brucella ovis (strain ATCC 25840 / 63/290 / NCTC 10512).